Here is a 428-residue protein sequence, read N- to C-terminus: 2,3-bisphosphoglycerate-independent phosphoglycerate mutase 2 (428 aa).

It belongs to the BPG-independent phosphoglycerate mutase family. A-PGAM subfamily.

The enzyme catalyses (2R)-2-phosphoglycerate = (2R)-3-phosphoglycerate. Its pathway is carbohydrate degradation; glycolysis; pyruvate from D-glyceraldehyde 3-phosphate: step 3/5. Functionally, catalyzes the interconversion of 2-phosphoglycerate and 3-phosphoglycerate. This chain is 2,3-bisphosphoglycerate-independent phosphoglycerate mutase 2 (apgM2), found in Methanocaldococcus jannaschii (strain ATCC 43067 / DSM 2661 / JAL-1 / JCM 10045 / NBRC 100440) (Methanococcus jannaschii).